Consider the following 135-residue polypeptide: UPF0355 protein SAV0387 (135 aa).

It belongs to the UPF0355 family.

This is UPF0355 protein SAV0387 from Staphylococcus aureus (strain Mu50 / ATCC 700699).